Reading from the N-terminus, the 3942-residue chain is MGNEASLEGGAGEGPLPPGGSGLGPGPGAGKPPSALAGGGQLPVAGAARAAGPPTPGLGPVPGPGPGPGPGSVPRRLDPKEPLGSQRTTSPTPKQASATAPGRESPRETRAQGPSGQEAESPRRTLQVDSRTQRSGRSPSVSPDRGSTPTSPYSVPQIAPLPSSTLCPICKTSDLTSTPSQPNFNTCTQCHNKVCNQCGFNPNPHLTQVKEWLCLNCQMQRALGMDMTTAPRSKSQQQLHSPALSPAHSPAKQPLGKPEQERSPRGPGATQSGPRQAEAARATSVPGPTQATAPPEVGRVSPQPPLSTKPSTAEPRPPAGEAQGKSATTVPSGLGAGEQTQEGLTGKLFGLGASLLTQASTLMSVQPEADTQGQPSPSKGQPKIVFSDASKEAGPRPPGSGPGPGPTPGAKTEPGARMGPGSGPGALAKTGGTASPKHGRAEHQAASKAAAKPKTMPKERASACPLCQAELNMGSRGPANYNTCTACKLQVCNLCGFNPTPHLVEKTEWLCLNCQTKRLLEGSLGEPAPLPLPTPQQPPAGVPHRAAGAAPLKQKGPQGLGQPSGSLPAKASPQATKASPQATKASPQATKASPQTTKASPQAKPLRATEPSKTSSSAQEKKTVTSAKAEPVPKPPPETTVPPGTPKAKSGVKRTDPATPVVKPVPEAPKGGEAEEPVPKPYSQDLSRSPQSLSDTGYSSDGVSSSQSEITGVVQQEVEQLDSAGVTGPRPPSPSELHKVGSSLRPSLEAQAVAPSAEWSKPPRSSSSAVEDQKRRPHSLSITPEAFDSDEELGDILEEDDSLAWGRQREQQDTAESSDDFGSQLRHDYVEDSSEGGLSPLPPQPPARADMTDEEFMRRQILEMSAEEDNLEEDDTAVSGRGLAKHSAQKASARPRPESSQEPKRRLPHNATTGYEELLSEAGPAEPTDSSGALQGGLRRFKTIELNSTGSYGHELDLGQGPDPNLDREPELEMESLTGSPEDRSRGEHSSTLPASTPSYTSGTSPTSLSSLEEDSDSSPSRRQRLEEAKQQRKARHRSHGPLLPTIEDSSEEEELREEEELLREQEKMREVEQQRIRSTARKTRRDKEELRAQRRRERSKTPPSNLSPIEDASPTEELRQAAEMEELHRSSCSEYSPSPSLDSEAETLDGGPTRLYKSGSEYNLPAFMSLYSPTETPSGSSTTPSSGRPLKSAEEAYEDMMRKAEMLQRQQGQVAGARGPHGGPSQPTGPRSQGSFEYQDTQDHDYGGRASQPVAESTPAGLGAAVYEEILQTSQSIARMRQASSRDLGFTEDKKKEKQFLNAESAYMDPMKQNGGPLTPGTSPTQLAAPVSFSTSTSSDSSGGRVIPDVRVTQHFAKEPQDPLKLHSSPVSSTLTSKEVGMTFSQGPGSPATTASPTRGYMTPTSPAGSERSPSTSSTIHSYGQPPTTANYGSQTEELPHAPSGPPGSGRAPREKPLSGGDSEVGAPQPSRGYSYFTGSSPPLSPSTPSESPTFSPGKLGPRATAEFSTQTPSLTLSSDIPRSPGPPSPMVAQGTQTPHRPSTPRLVWQQSSQEAPIMVITLASDASSQTRMVHASASTSPLCSPTDSQPTSHSYSQTTPPSASQMPSEPAGPPGFPRAPSAGTDGPLALYGWGALPAENISLCRISSVPGTSRVEPGPRPPGTAVVDLRTAVKPTPIILTDQGMDLTSLAVEARKYGLALDPVSGRQSTAVQPLVINLNAQEQTHTFLATATTVSITMASSVLMAQQKQPVVYGDPFQSRLDFGQGSGSPVCLAQVKQVEQAVQTAPYRGGPRGRPREAKFARYNLPNQVTPLARRDILITQMGTAQGVGLKPGPVPEPGAEPHRATPAELRSHAPPGTRKPHTVVVQMGEGTAGTVTTLLPEEPAGALDLTGMRPESQLACCDMVYKFPFGSSCTGTFHPAPSAPDKSVTDTALPGQSSGPFYSPRDPEPPEPLTFRTQGVVGPGPHEEQRPYPQGLPGRLYSSMSDTNLAEAGLNYHAQRLGQLFQGPGRDSAVDLSSLKHSYSLGFADGRYLGQGLQYGSFTDLRHPTDLLSHPLPLRRYSSVSNIYSDHRYGPRGDAVGFQEASLAQYSATTAREISRMCAALNSMDQYGGRHGSGSGGPDLVQYQPQHGPGLSAPQGLAPLRSGLLGNPTYPEGQPSPGNLAQYGPAASQATAVRQLLPSTATVRAADGMIYSTINTPIAATLPITTQPASVLRPMVRGGMYRPYVSGGVTAVPLTSLTRVPMIAPRVPLGPAGLYRYPAPRFPIASSVPPAEGPVYLGKPAAAKASGAGGPPRPELPAGVAREEPFSTTAPAVIKEAPVAPAPGPAPAPPPGQKPAGEAVAGSGSGVLSRPASEKEEASQEDRQRKQQEQLLQLERERVELEKLRQLRLQEELERERVELQRHREEEQLLVQRELQELQTIKQHVLQQQQEERQAQFALQREQLAQQRLQLEQIQQLQQQLQLQLEEQKQRQKAPFPATCEAPSRGPPPAATELAQNGQYWPPLTHAAFIAVAGTEGPGQPREPVLHRGLPSSASDMSLQTEEQWEAGRSGIKKRHSMPRLRDACEPESGPDPSTVRRIADSSVQTDDEEGEGRYLVTRRRRTRRSADCSVQTDDEDNADWEQPVRRRRSRLSRHSDSGSDSKHDATASSSTTAAATARAMSSVGIQTISDCSVQTEPEQLPRVSPAIHITAATDPKVEIVRYISAPEKTGRGESLACQTEPDGQAQGVAGPQLIGPTAISPYLPGIQIVTPGALGRFEKKKPDPLEIGYQAHLPPESLSQLVSRQPPKSPQVLYSPVSPLSPHRLLDTSFASSERLNKAHVSPQKQFIADSTLRQQTLPRPMKTLQRSLSDPKPLSPTAEESAKERFSLYQHQGGLGSQVSALPPNGLVRKVKRTLPSPPPEEAHLPLAGQVPSQLYAASLLQRGLAGPTTVPATKASLLRELDRDLRLVEHESTKLRKKQAELDEEEKEIDAKLKYLELGITQRKESLAKDRGGRDYPPLRGLGEHRDYLSDSELNQLRLQGCTTPAGQYVDYPASAAVPATPSGPTAFQQPRFPPAAPQYTAGSSGPTQNGFPAHQAPTYTGPSTYPAPTYPPGTGYPAEPGLPSQPAFHPTGHYAAPTPMPTTQSAPFPVQADSRAAHQKPRQTSLADLEQKVPTNYEVIGSPAVTMSSAPPETGYSGPAVSGSYEQGKAPEHPRGSDRSSVSQSPAPTYPSDSHYTSLEQNVPRNYVMIDDISELTKDSTPTASESQRLEPLGPGGVSGRPGKDPGEPAVLEGPTLPCCYGRGEEESEEDSYDPRGKSGHHRSMESNGRPSTHYYGDSDYRHGARADKYGPGPMGPKHPSKSLAPAAISSKRSKHRKQGMEQKISKFSPIEEAKDVESDLASYPPPTVSSSLTSRGRKFQDEITYGLKKNVYEQQRYYGVSSRDAAEEDERMYGSSSRSRMASAYSGEKLSSHDYSSRGKGYERERDTAERLQKAGSKPSSLSMAHGRARPPMRSQASEEESPVSPLGRPRPAGGALPPGDTCPQFCSSHSMPDVQEHVKDGPRAHAYKREEGYMLDDSHCVVSDSEAYHLGQEETDWFDKPRDARSDRFRHHGGHTVSSSQKRGPARHSYHDYDEPPEEGLWPHDEGGPGRHTSAKEHRHHSDHGRHSGRHAGEEPGRRAAKPHARDMGRHEARPHPQASPAPAMQKKGQPGYPSSADYSQSSRAPSAYHHASESKKGSRQAHTGPSALQPKADTQAQPQMQGRQAAPGPQQSQPPSSRQTPSGTASRQPQTQQQQQQQQQQQGLGQQAPQQAPSQARLQPQSQPTTRGTAPAASQPAGKPQPGPTTAPGPQPAGPPRAEQASSSKPPAAKAPQQGRAPQAQTTPGPGPAGAKPGARPGGTPGAPASQPGAEGESVFSKILPGGAAEQAGKLTEAVSAFGKKFSSFW.

The segment at 1 to 158 is disordered; it reads MGNEASLEGG…PTSPYSVPQI (158 aa). A lipid anchor (N-myristoyl glycine) is attached at glycine 2. Residues 9 to 29 show a composition bias toward gly residues; the sequence is GGAGEGPLPPGGSGLGPGPGA. The segment covering 31 to 52 has biased composition (low complexity); sequence KPPSALAGGGQLPVAGAARAAG. Pro residues predominate over residues 53–71; sequence PPTPGLGPVPGPGPGPGPG. The segment at 62–71 is 5 X 2 AA tandem repeats of P-G; it reads PGPGPGPGPG. Polar residues-rich tracts occupy residues 85–98 and 127–154; these read SQRT…QASA and QVDS…SPYS. The residue at position 142 (serine 142) is a Phosphoserine. Arginine 145 is subject to Omega-N-methylarginine. C4-type zinc fingers lie at residues 167-190 and 195-217; these read CPIC…CTQC and CNQC…CLNC. 2 disordered regions span residues 228–341 and 362–457; these read TTAP…EQTQ and LMSV…KTMP. Over residues 230–240 the composition is skewed to polar residues; that stretch reads APRSKSQQQLH. Phosphoserine is present on residues serine 241 and serine 245. A compositionally biased stretch (polar residues) spans 362–379; the sequence is LMSVQPEADTQGQPSPSK. The span at 395–407 shows a compositional bias: pro residues; sequence PRPPGSGPGPGPT. C4-type zinc fingers lie at residues 464–487 and 492–514; these read CPLC…CTAC and CNLC…CLNC. Disordered regions lie at residues 525-937, 950-1258, 1309-1553, and 1573-1625; these read GEPA…LQGG, GSYG…VAES, MDPM…WQQS, and RMVH…PSAG. Pro residues predominate over residues 528-541; the sequence is APLPLPTPQQPPAG. A run of 5 repeats spans residues 570 to 576, 577 to 583, 584 to 590, 591 to 597, and 598 to 604. The interval 570–604 is 5 X 7 AA tandem repeats of K-A-S-P-Q-[AT]-[AT]; sequence KASPQATKASPQATKASPQATKASPQTTKASPQAK. A compositionally biased stretch (polar residues) spans 573–600; it reads PQATKASPQATKASPQATKASPQTTKAS. The segment covering 632-645 has biased composition (pro residues); that stretch reads VPKPPPETTVPPGT. Residues 684 to 693 are compositionally biased toward polar residues; the sequence is QDLSRSPQSL. Low complexity predominate over residues 694-708; sequence SDTGYSSDGVSSSQS. A compositionally biased stretch (polar residues) spans 709–718; the sequence is EITGVVQQEV. Acidic residues-rich tracts occupy residues 787-802 and 865-876; these read FDSD…EDDS and SAEEDNLEEDDT. Arginine 881 is subject to Omega-N-methylarginine. Residues 895 to 905 show a composition bias toward basic and acidic residues; the sequence is PRPESSQEPKR. Residue serine 980 is modified to Phosphoserine. Over residues 994-1011 the composition is skewed to low complexity; it reads PASTPSYTSGTSPTSLSS. Acidic residues predominate over residues 1049 to 1062; it reads DSSEEEELREEEEL. Residues serine 1050 and serine 1051 each carry the phosphoserine modification. A compositionally biased stretch (basic and acidic residues) spans 1063–1076; the sequence is LREQEKMREVEQQR. Position 1100 is a phosphoserine (serine 1100). Threonine 1102 is subject to Phosphothreonine. 2 positions are modified to phosphoserine: serine 1108 and serine 1114. The span at 1117–1132 shows a compositional bias: basic and acidic residues; sequence EELRQAAEMEELHRSS. Low complexity-rich tracts occupy residues 1133 to 1143 and 1173 to 1190; these read CSEYSPSPSLD and SPTE…SGRP. Basic and acidic residues predominate over residues 1192-1207; sequence KSAEEAYEDMMRKAEM. Positions 1209–1219 are enriched in low complexity; it reads QRQQGQVAGAR. Residues 1226 to 1240 are compositionally biased toward polar residues; that stretch reads SQPTGPRSQGSFEYQ. Serine 1236 is modified (phosphoserine). The span at 1333–1343 shows a compositional bias: low complexity; sequence SFSTSTSSDSS. O-linked (GlcNAc) threonine glycosylation is present at threonine 1354. The span at 1357–1366 shows a compositional bias: basic and acidic residues; sequence FAKEPQDPLK. The span at 1370–1438 shows a compositional bias: polar residues; sequence SPVSSTLTSK…TTANYGSQTE (69 aa). Residue threonine 1395 is glycosylated (O-linked (GlcNAc) threonine). 3 positions are modified to phosphoserine: serine 1482, serine 1491, and serine 1493. The segment covering 1488–1498 has biased composition (low complexity); the sequence is STPSESPTFSP. 2 stretches are compositionally biased toward polar residues: residues 1508-1522 and 1573-1609; these read EFST…SSDI and RMVH…SQMP. Residue serine 1707 is glycosylated (O-linked (GlcNAc) serine). 2 positions are modified to omega-N-methylarginine: arginine 1792 and arginine 1796. Arginine 1806 is subject to Asymmetric dimethylarginine; alternate. Arginine 1806 is modified (omega-N-methylarginine; alternate). Arginine 1818 carries the omega-N-methylarginine modification. Disordered regions lie at residues 1831–1865 and 1926–1977; these read GVGL…TRKP and PSAP…QRPY. The segment covering 1844–1856 has biased composition (basic and acidic residues); the sequence is AEPHRATPAELRS. Threonine 1934 carries an O-linked (GlcNAc) threonine glycan. 2 positions are modified to phosphoserine: serine 1990 and serine 2046. 2 positions are modified to omega-N-methylarginine: arginine 2051 and arginine 2081. Asymmetric dimethylarginine is present on residues arginine 2255, arginine 2265, and arginine 2270. Threonine 2318 carries O-linked (GlcNAc) threonine glycosylation. Disordered stretches follow at residues 2327–2378, 2476–2504, and 2524–2663; these read PVAP…KQQE, EQKQ…TELA, and TEGP…STTA. Residues 2329–2342 show a composition bias toward pro residues; it reads APAPGPAPAPPPGQ. Over residues 2361 to 2378 the composition is skewed to basic and acidic residues; it reads ASEKEEASQEDRQRKQQE. Coiled coils occupy residues 2366–2422 and 2453–2483; these read EASQ…LVQR and LAQQ…RQKA. An O-linked (GlcNAc) threonine glycan is attached at threonine 2524. The span at 2541–2551 shows a compositional bias: polar residues; the sequence is SSASDMSLQTE. Residue serine 2578 is modified to Phosphoserine. Residues threonine 2595 and threonine 2622 each carry the phosphothreonine modification. Residues 2643-2655 show a composition bias toward basic and acidic residues; sequence RHSDSGSDSKHDA. O-linked (GlcNAc) threonine glycosylation is present at threonine 2700. Residues 2730-3278 form an interaction with DAO region; the sequence is EPDGQAQGVA…GGVSGRPGKD (549 aa). A phosphoserine mark is found at serine 2811, serine 2860, and serine 2866. The interval 2854–2874 is disordered; the sequence is TLQRSLSDPKPLSPTAEESAK. Threonine 2945 carries O-linked (GlcNAc) threonine glycosylation. Residue serine 3022 is modified to Phosphoserine. Disordered stretches follow at residues 3051 to 3409, 3431 to 3560, and 3581 to 3917; these read PATP…LTSR, YYGV…PRAH, and EAYH…KILP. The span at 3073-3083 shows a compositional bias: polar residues; it reads TAGSSGPTQNG. Residues 3089-3114 are compositionally biased toward low complexity; that stretch reads APTYTGPSTYPAPTYPPGTGYPAEPG. Over residues 3202–3211 the composition is skewed to basic and acidic residues; it reads KAPEHPRGSD. The span at 3212–3237 shows a compositional bias: polar residues; that stretch reads RSSVSQSPAPTYPSDSHYTSLEQNVP. Phosphoserine is present on serine 3301. Basic and acidic residues-rich tracts occupy residues 3330-3342 and 3372-3391; these read GDSD…RADK and QGME…KDVE. Serine 3382 is subject to Phosphoserine. Residues 3447–3461 show a composition bias toward low complexity; it reads YGSSSRSRMASAYSG. A compositionally biased stretch (basic and acidic residues) spans 3464–3487; that stretch reads LSSHDYSSRGKGYERERDTAERLQ. Arginine 3502 carries the post-translational modification Omega-N-methylarginine. The span at 3520-3534 shows a compositional bias: low complexity; that stretch reads PLGRPRPAGGALPPG. 2 stretches are compositionally biased toward basic and acidic residues: residues 3549-3560 and 3592-3602; these read VQEHVKDGPRAH and WFDKPRDARSD. Residues 3652–3665 show a composition bias toward basic residues; it reads EHRHHSDHGRHSGR. Positions 3666-3690 are enriched in basic and acidic residues; that stretch reads HAGEEPGRRAAKPHARDMGRHEARP. Over residues 3750–3820 the composition is skewed to low complexity; it reads TQAQPQMQGR…QARLQPQSQP (71 aa). Arginine 3823 carries the omega-N-methylarginine modification. Pro residues predominate over residues 3835–3851; the sequence is KPQPGPTTAPGPQPAGP. Residues 3856 to 3891 show a composition bias toward low complexity; the sequence is QASSSKPPAAKAPQQGRAPQAQTTPGPGPAGAKPGA.

As to quaternary structure, interacts with PCLO, ERC2/CAST1, RIMS1 and UNC13A. Interacts with TPRG1L. Interacts with DYNLL1 and DYNLL2; these interactions potentially link PTVs to dynein and myosin V motor complexes. Interacts with ATG5; this interaction is important for the regulation of presynaptic autophagy. Interacts (via C-terminus) with TRIO (via N-terminus). Interacts with CTBP1. Interacts with SIAH1; this interaction negatively regulates SIAH1 E3 ligase activity. Interacts (via coiled region) with DAO; the interaction is direct. Myristoylated. The N-terminal myristoylation is not sufficient for presynaptic localization. Expressed in brain and retina.

It is found in the cytoplasm. It localises to the presynaptic active zone. Its subcellular location is the cytoskeleton. The protein resides in the cytoplasmic vesicle. The protein localises to the secretory vesicle. It is found in the synaptic vesicle membrane. Scaffold protein of the presynaptic cytomatrix at the active zone (CAZ) which is the place in the synapse where neurotransmitter is released. After synthesis, participates in the formation of Golgi-derived membranous organelles termed Piccolo-Bassoon transport vesicles (PTVs) that are transported along axons to sites of nascent synaptic contacts. At the presynaptic active zone, regulates the spatial organization of synaptic vesicle cluster, the protein complexes that execute membrane fusion and compensatory endocytosis. Also functions in processes other than assembly such as the regulation of specific presynaptic protein ubiquitination by interacting with SIAH1 or the regulation of presynaptic autophagy by associating with ATG5. Also mediates synapse to nucleus communication leading to reconfiguration of gene expression by associating with the transcriptional corepressor CTBP1 and by subsequently reducing the size of its pool available for nuclear import. Inhibits the activity of the proportion of DAO enzyme that localizes to the presynaptic active zone, which may modulate synaptic transmission. The protein is Protein bassoon of Mus musculus (Mouse).